The chain runs to 396 residues: Acetate kinase (396 aa).

Asparagine 8 is a Mg(2+) binding site. Residue lysine 15 participates in ATP binding. Substrate is bound at residue arginine 89. The Proton donor/acceptor role is filled by aspartate 146. Residues 206–210, 283–285, and 331–335 contribute to the ATP site; these read HIGNG, DMR, and GVGEN. Glutamate 383 contacts Mg(2+).

Belongs to the acetokinase family. In terms of assembly, homodimer. It depends on Mg(2+) as a cofactor. Mn(2+) is required as a cofactor.

The protein localises to the cytoplasm. The enzyme catalyses acetate + ATP = acetyl phosphate + ADP. The protein operates within metabolic intermediate biosynthesis; acetyl-CoA biosynthesis; acetyl-CoA from acetate: step 1/2. Functionally, catalyzes the formation of acetyl phosphate from acetate and ATP. Can also catalyze the reverse reaction. In Streptococcus pneumoniae (strain ATCC 700669 / Spain 23F-1), this protein is Acetate kinase.